The primary structure comprises 406 residues: MKRAFILVLDSFGIGATADAKEFGDVGSDTLGHIADQCEQGLANNDQRQGALRLPNLSKLGLAMAHKESTGRFAPGLDADAEIIGAYGHAAELSSGKDTPSGHWEIAGVPVLFEWGYFTDKANSFPKELTDRILARAGIDGFLGNCHASGTQVLDDLGEEHMKTGQPIFYTSADSVFQIACHEETFGLDRLLELCQIAREELADYNIGRVIARPFIGPGKGQFERTGNRRDLSVEPPSATVLQKLAEEKQGQVVSIGKIADIYANCGITKKVKATGIPALFEATLEQIKQAGDNTIVFTNFVDFDSAYGHRRDVAGYAAALEYFDGRIHEVMELMQEDDILILTADHGCDPTWPGTDHTREHIPVLVYGQKVPAGSLGRRETFADIGQTLASYFGTSPMDYGKNFL.

Mn(2+) is bound by residues Asp10, Asp305, His310, Asp346, His347, and His358.

This sequence belongs to the phosphopentomutase family. Requires Mn(2+) as cofactor.

Its subcellular location is the cytoplasm. The enzyme catalyses 2-deoxy-alpha-D-ribose 1-phosphate = 2-deoxy-D-ribose 5-phosphate. The catalysed reaction is alpha-D-ribose 1-phosphate = D-ribose 5-phosphate. Its pathway is carbohydrate degradation; 2-deoxy-D-ribose 1-phosphate degradation; D-glyceraldehyde 3-phosphate and acetaldehyde from 2-deoxy-alpha-D-ribose 1-phosphate: step 1/2. Its function is as follows. Isomerase that catalyzes the conversion of deoxy-ribose 1-phosphate (dRib-1-P) and ribose 1-phosphate (Rib-1-P) to deoxy-ribose 5-phosphate (dRib-5-P) and ribose 5-phosphate (Rib-5-P), respectively. The protein is Phosphopentomutase of Vibrio vulnificus (strain CMCP6).